Here is a 500-residue protein sequence, read N- to C-terminus: Endothelial lipase (500 aa).

A signal peptide spans 1-20 (MSNSVPLLCFWSLCYCFAAG). C64 and C77 are disulfide-bonded. N-linked (GlcNAc...) asparagine glycosylation is found at N80 and N136. S169 functions as the Nucleophile in the catalytic mechanism. D193 functions as the Charge relay system in the catalytic mechanism. C252 and C272 are disulfide-bonded. H274 (charge relay system) is an active-site residue. 2 disulfides stabilise this stretch: C297–C316 and C308–C311. 325–337 (KMRNKRNSKMYLK) is a heparin binding site. In terms of domain architecture, PLAT spans 347 to 482 (YHYQMKIHVF…SPGRELWFRK (136 aa)). 3 N-linked (GlcNAc...) asparagine glycosylation sites follow: N393, N469, and N491. An intrachain disulfide couples C463 to C483.

This sequence belongs to the AB hydrolase superfamily. Lipase family. As to quaternary structure, head to tail homodimer. As to expression, high level of expression in the liver, placenta, lung, thyroid, kidney, testis and in the corpus luteum of the ovary. Expressed also in coronary artery endothelial cells, umbilical vein endothelial cells and in hepatocytes and osteosarcoma cell lines. Not detected in heart, brain and muscle.

Its subcellular location is the secreted. The catalysed reaction is a triacylglycerol + H2O = a diacylglycerol + a fatty acid + H(+). It carries out the reaction a 1,2-diacyl-sn-glycero-3-phosphocholine + H2O = a 2-acyl-sn-glycero-3-phosphocholine + a fatty acid + H(+). It catalyses the reaction 1,2,3-tri-(9Z-octadecenoyl)-glycerol + H2O = di-(9Z)-octadecenoylglycerol + (9Z)-octadecenoate + H(+). The enzyme catalyses 1,2,3-tributanoylglycerol + H2O = dibutanoylglycerol + butanoate + H(+). The catalysed reaction is 1,2-dihexadecanoyl-sn-glycero-3-phosphocholine + H2O = hexadecanoyl-sn-glycero-3-phosphocholine + hexadecanoate + H(+). Its activity is regulated as follows. Inhibited by serum and NaCl. In terms of biological role, exerts both phospholipase and triglyceride lipase activities. More active as a phospholipase than a triglyceride lipase. Hydrolyzes triglycerides, both with short-chain fatty acyl groups (tributyrin) and long-chain fatty acyl groups (triolein) with similar levels of activity toward both types of substrates. Hydrolyzes high density lipoproteins (HDL) more efficiently than other lipoproteins. The sequence is that of Endothelial lipase (LIPG) from Homo sapiens (Human).